The sequence spans 263 residues: MSRLTAEAISLSFEQRGQRRAILRDLSLGLAKGESLVVLGPSGCGKSTLLNILAGFQTPDQGRVQIDGRTLEGPGGERGVVFQDDALMPWLNALDNVALGLRIRGLGKAERTARARQVLQLVGLQEYAEQSVAELSGGQRQRLGLARALAVEPDFLLLDEPFGALDALTRERMQVLLLDLWKQTGKGLFLITHSVDEALFLATDLVVMDGPPARIVKRLPVDFARRYAAGETVRSIKSDPEFGRLRQALLDEFLDVAEAEHAH.

One can recognise an ABC transporter domain in the interval leucine 4–serine 235. Residue glycine 40–serine 47 coordinates ATP.

The protein belongs to the ABC transporter superfamily. Taurine importer (TC 3.A.1.17.1) family. As to quaternary structure, the complex is composed of two ATP-binding proteins (TauB), two transmembrane proteins (TauC) and a solute-binding protein (TauA).

It localises to the cell inner membrane. It carries out the reaction taurine(out) + ATP + H2O = taurine(in) + ADP + phosphate + H(+). Functionally, part of the ABC transporter complex TauABC involved in taurine import. Responsible for energy coupling to the transport system. This is Taurine import ATP-binding protein TauB from Pseudomonas aeruginosa (strain UCBPP-PA14).